Here is a 631-residue protein sequence, read N- to C-terminus: Chaperone protein DnaK (631 aa).

The residue at position 197 (Thr197) is a Phosphothreonine; by autocatalysis. The disordered stretch occupies residues 599–631; that stretch reads AQSDAGAAGSASEENTTSNEKVVDADFEDVEKK. A compositionally biased stretch (low complexity) spans 603–612; it reads AGAAGSASEE.

The protein belongs to the heat shock protein 70 family.

Its function is as follows. Acts as a chaperone. The sequence is that of Chaperone protein DnaK from Rickettsia bellii (strain RML369-C).